The sequence spans 320 residues: Ribosomal RNA large subunit methyltransferase F (320 aa).

The interval 1–20 (MHKSANSKTRKQSKGLHPRN) is disordered.

This sequence belongs to the methyltransferase superfamily. METTL16/RlmF family.

The protein resides in the cytoplasm. It catalyses the reaction adenosine(1618) in 23S rRNA + S-adenosyl-L-methionine = N(6)-methyladenosine(1618) in 23S rRNA + S-adenosyl-L-homocysteine + H(+). Its function is as follows. Specifically methylates the adenine in position 1618 of 23S rRNA. This Saccharophagus degradans (strain 2-40 / ATCC 43961 / DSM 17024) protein is Ribosomal RNA large subunit methyltransferase F.